The sequence spans 337 residues: F-box protein At2g27310 (337 aa).

The F-box domain occupies 10 to 58 (DSISTLHSDIIQTQILTRLDGPTLASTATTSSYLQTLCTEEKLWQELSI).

This Arabidopsis thaliana (Mouse-ear cress) protein is F-box protein At2g27310.